We begin with the raw amino-acid sequence, 250 residues long: 23S rRNA (guanosine-2'-O-)-methyltransferase RlmB (250 aa).

Glycine 198, leucine 218, and leucine 227 together coordinate S-adenosyl-L-methionine.

This sequence belongs to the class IV-like SAM-binding methyltransferase superfamily. RNA methyltransferase TrmH family. RlmB subfamily.

The protein localises to the cytoplasm. The enzyme catalyses guanosine(2251) in 23S rRNA + S-adenosyl-L-methionine = 2'-O-methylguanosine(2251) in 23S rRNA + S-adenosyl-L-homocysteine + H(+). Its function is as follows. Specifically methylates the ribose of guanosine 2251 in 23S rRNA. This chain is 23S rRNA (guanosine-2'-O-)-methyltransferase RlmB, found in Pseudomonas syringae pv. tomato (strain ATCC BAA-871 / DC3000).